We begin with the raw amino-acid sequence, 223 residues long: MHLSGDEIIIWQHGFVKLNLTIATTWALMLVLVGGSAFASRRLSNGMHRPRWQNVLEIIVGMARRQIEEVGLRRSMQYLPYLGTLFIFIAFSNLCTIIPGYEPPTGSLSTTAALAMSVFVAVPLFGIAESGLGGYLSTYVKPTPIMLPFNIISELSRTLALAVRLFGNIMSGSMILAILLTVTPFVFPVLMSVLGLLTGMVQAYIFSILATVYISAATRARKE.

Helical transmembrane passes span 20 to 40 (LTIA…AFAS), 78 to 98 (YLPY…CTII), 108 to 128 (LSTT…FGIA), 174 to 194 (MILA…MSVL), and 196 to 216 (LLTG…YISA).

Belongs to the ATPase A chain family. In terms of assembly, F-type ATPases have 2 components, CF(1) - the catalytic core - and CF(0) - the membrane proton channel. CF(1) has five subunits: alpha(3), beta(3), gamma(1), delta(1), epsilon(1). CF(0) has four main subunits: a, b, b' and c.

Its subcellular location is the cell inner membrane. Key component of the proton channel; it plays a direct role in the translocation of protons across the membrane. This chain is ATP synthase subunit a 1, found in Chlorobium luteolum (strain DSM 273 / BCRC 81028 / 2530) (Pelodictyon luteolum).